Reading from the N-terminus, the 286-residue chain is Shikimate dehydrogenase (NADP(+)) (286 aa).

Shikimate contacts are provided by residues 20–22 (SLS) and S67. K71 acts as the Proton acceptor in catalysis. N92 and D107 together coordinate shikimate. Residues 131–135 (GGGGA) and A230 each bind NADP(+). Y232 lines the shikimate pocket. G253 is a binding site for NADP(+).

This sequence belongs to the shikimate dehydrogenase family. As to quaternary structure, homodimer.

It carries out the reaction shikimate + NADP(+) = 3-dehydroshikimate + NADPH + H(+). It participates in metabolic intermediate biosynthesis; chorismate biosynthesis; chorismate from D-erythrose 4-phosphate and phosphoenolpyruvate: step 4/7. Involved in the biosynthesis of the chorismate, which leads to the biosynthesis of aromatic amino acids. Catalyzes the reversible NADPH linked reduction of 3-dehydroshikimate (DHSA) to yield shikimate (SA). The protein is Shikimate dehydrogenase (NADP(+)) of Lactococcus lactis subsp. cremoris (strain SK11).